A 193-amino-acid polypeptide reads, in one-letter code: Selenate reductase assembly chaperone protein (193 aa).

This sequence belongs to the type II DMSO reductase enzyme chaperone family.

It localises to the cytoplasm. May function as a system-specific chaperone protein essential for the assembly of an active selenate reductase SerABC. The polypeptide is Selenate reductase assembly chaperone protein (Thauera selenatis).